The following is a 196-amino-acid chain: Small ribosomal subunit protein uS4c (196 aa).

The region spanning 82–143 is the S4 RNA-binding domain; it reads MRLDNILFRL…KQKSKALIQN (62 aa).

It belongs to the universal ribosomal protein uS4 family. In terms of assembly, part of the 30S ribosomal subunit. Contacts protein S5. The interaction surface between S4 and S5 is involved in control of translational fidelity.

It is found in the plastid. Its subcellular location is the chloroplast. Functionally, one of the primary rRNA binding proteins, it binds directly to 16S rRNA where it nucleates assembly of the body of the 30S subunit. With S5 and S12 plays an important role in translational accuracy. In Patersonia sp. (strain Lejeune 1997), this protein is Small ribosomal subunit protein uS4c (rps4).